A 557-amino-acid polypeptide reads, in one-letter code: Urease subunit alpha (557 aa).

The Urease domain maps to G130–Y557. 3 residues coordinate Ni(2+): H135, H137, and K217. Residue K217 is modified to N6-carboxylysine. H219 contributes to the substrate binding site. Residues H246 and H272 each contribute to the Ni(2+) site. H320 (proton donor) is an active-site residue. D360 is a binding site for Ni(2+).

Belongs to the metallo-dependent hydrolases superfamily. Urease alpha subunit family. As to quaternary structure, heterohexamer of 3 UreC (alpha) and 3 UreAB (gamma/beta) subunits. Ni cation is required as a cofactor. Carboxylation allows a single lysine to coordinate two nickel ions.

The protein resides in the cytoplasm. It carries out the reaction urea + 2 H2O + H(+) = hydrogencarbonate + 2 NH4(+). It participates in nitrogen metabolism; urea degradation; CO(2) and NH(3) from urea (urease route): step 1/1. This is Urease subunit alpha from Sulfurisphaera tokodaii (strain DSM 16993 / JCM 10545 / NBRC 100140 / 7) (Sulfolobus tokodaii).